Reading from the N-terminus, the 553-residue chain is Urocanate hydratase (553 aa).

NAD(+)-binding positions include 45–46 (GG), Q123, 169–171 (GMG), D189, R194, 235–236 (NA), 256–260 (QTSAH), 266–267 (YV), Y315, and G485.

The protein belongs to the urocanase family. Requires NAD(+) as cofactor.

Its subcellular location is the cytoplasm. It carries out the reaction 4-imidazolone-5-propanoate = trans-urocanate + H2O. Its pathway is amino-acid degradation; L-histidine degradation into L-glutamate; N-formimidoyl-L-glutamate from L-histidine: step 2/3. Catalyzes the conversion of urocanate to 4-imidazolone-5-propionate. The protein is Urocanate hydratase of Staphylococcus aureus (strain MRSA252).